An 815-amino-acid polypeptide reads, in one-letter code: MDVADAQIGQLRVKDDVGIRTQKLFQDFLEEFKENGEIKYTRPAANLESPDRCTLEVSFEDVEKYDQNLATAIIEEYYHVYPFLCQSVSNYVKDRIGLKTNKDCYVAFTEVPTRHKVRDLTTSKIGTLIRISGQVVRTHPVHPELVSGTFMCLDCQTEIRNVEQQFKFTNPTICRNPVCSNRRRFMLDVEKSLFLDFQKIRIQETQAELPRGCIPRAVEIILRSELVETVQAGDRYDFTGTLIVVPDVSVLAMPGTRAESGSRHKPGEGMEGVTGLKALGMRELNYRMAFLACSVQATTARFGGTDLPMSEVTAEDMKKQMTDAEWHKIYEMSKDRNLYQNLITCLFPSIYGNDEVKRGILLQLFGGVAKTTIEKTSLRGDVNVCIVGDPSTAKSQFLKQVSDFSPRAIYTSGKASSAAGLTAAVVRDEESFDFVIEAGALMLADNGICCIDEFDKMDLRDQVAIHEAMEQQTISIARAGVRATLNARTSILAAANPINGRYDRSKSLQQNIQLSAPIMSRFDLFFILVDECNEVVDYAIARKIVDLHSNIEESVERAYSREEVLRYVTFARQFKPIIGQEAGKMLVENYGHLRQRDTGTAGRSTWRITVRQLESMIRLSEAMAKLECSNRVLERHVKEAFRLLNKSIIRVEQPDIHLDDDDDLDVDDGIQDDIDMENNGSAANTETDTLDTSGASTVQKKKFTLSFEDYKNLSTMLVLHMRGEEARCEVEGSDSGMKRSDVVTWYLEQVADQIESEDELISRKNLIEKLIDRLIYHDQVIIPLKTSNLSRIKGPAEEQVDNDPLLVVHPNYVVD.

The C4-type zinc finger occupies 152–179 (CLDCQTEIRNVEQQFKFTNPTICRNPVC). The 207-residue stretch at 338–544 (LYQNLITCLF…VVDYAIARKI (207 aa)) folds into the MCM domain. ATP is bound by residues S391, T392, A393, K394, S395, and N496. The Arginine finger signature appears at 520–523 (SRFD). Residues R611 and E614 each contribute to the ADP site. Positions 672–693 (DDIDMENNGSAANTETDTLDTS) are disordered. The segment covering 678 to 693 (NNGSAANTETDTLDTS) has biased composition (polar residues).

It belongs to the MCM family. Component of the Mcm2-7 complex. The complex forms a toroidal hexameric ring with the proposed subunit order Mcm2-Mcm6-Mcm4-Mcm7-Mcm3-Mcm5. The heterodimers of mcm4/mcm6 and mcm3/mcm5 interact with mcm2 and mcm7.

Its subcellular location is the nucleus. It catalyses the reaction ATP + H2O = ADP + phosphate + H(+). Its function is as follows. Acts as a component of the Mcm2-7 complex (Mcm complex) which is the putative replicative helicase essential for 'once per cell cycle' DNA replication initiation and elongation in eukaryotic cells. Core component of CDC45-MCM-GINS (CMG) helicase, the molecular machine that unwinds template DNA during replication, and around which the replisome is built. The active ATPase sites in the Mcm2-7 ring are formed through the interaction surfaces of two neighboring subunits such that a critical structure of a conserved arginine finger motif is provided in trans relative to the ATP-binding site of the Walker A box of the adjacent subunit. The six ATPase active sites, however, are likely to contribute differentially to the complex helicase activity Required for DNA replication and cell proliferation. Required for mitotic cycles, endocycles, and the special S phase associated with the amplification of chorion genes; has a role in origin unwinding or fork elongation at chorion loci. Functionally, acts as a component of the MCM2-7 complex (MCM complex) which is the replicative helicase essential for 'once per cell cycle' DNA replication initiation and elongation in eukaryotic cells. Core component of CDC45-MCM-GINS (CMG) helicase, the molecular machine that unwinds template DNA during replication, and around which the replisome is built. The active ATPase sites in the MCM2-7 ring are formed through the interaction surfaces of two neighboring subunits such that a critical structure of a conserved arginine finger motif is provided in trans relative to the ATP-binding site of the Walker A box of the adjacent subunit. The six ATPase active sites, however, are likely to contribute differentially to the complex helicase activity. This chain is DNA replication licensing factor Mcm6 (Mcm6), found in Drosophila pseudoobscura pseudoobscura (Fruit fly).